Consider the following 1007-residue polypeptide: Ephrin type-A receptor 10 (1007 aa).

The signal sequence occupies residues 1–22 (METGAGPHPLRLFVCLIPLCLA). Topologically, residues 23-565 (LLLGPGRPGT…APGSRDQSPA (543 aa)) are extracellular. One can recognise an Eph LBD domain in the interval 35 to 216 (EVILLDSKAS…YYKQCRATVR (182 aa)). Residue Asn311 is glycosylated (N-linked (GlcNAc...) asparagine). Disordered stretches follow at residues 323 to 343 (ARSP…APRD) and 467 to 486 (PQSV…PGTN). 2 Fibronectin type-III domains span residues 340 to 452 (APRD…TGPG) and 456 to 554 (EEDE…TPGE). N-linked (GlcNAc...) asparagine glycosylation occurs at Asn486. Residues 566–586 (VVVTVVTISALLVLGSVMSVL) form a helical membrane-spanning segment. Residues 587–1007 (AIWRRPCDGK…LQLQGQGVQV (421 aa)) lie on the Cytoplasmic side of the membrane. One can recognise a Protein kinase domain in the interval 644 to 899 (VTLEKSLGAG…PRFSQIHSIL (256 aa)). Positions 932-996 (PSFGSVGAWL…LSGISALQTR (65 aa)) constitute an SAM domain.

This sequence belongs to the protein kinase superfamily. Tyr protein kinase family. Ephrin receptor subfamily. As to expression, expressed in the cochlea, in the organ of Corti, spiral ganglion, and stria vascularis.

The protein resides in the cell membrane. It catalyses the reaction L-tyrosyl-[protein] + ATP = O-phospho-L-tyrosyl-[protein] + ADP + H(+). Functionally, receptor for members of the ephrin-A family. Binds to EFNA3, EFNA4 and EFNA5. The chain is Ephrin type-A receptor 10 (Epha10) from Mus musculus (Mouse).